We begin with the raw amino-acid sequence, 310 residues long: UPF0324 membrane protein VP0936 (310 aa).

10 helical membrane-spanning segments follow: residues 7 to 29 (PFGL…LVIG), 44 to 63 (IASF…GFGI), 75 to 94 (GIGL…SLIA), 104 to 126 (AYLI…APAI), 133 to 155 (IGLA…PVIG), 165 to 187 (FGTW…SAYG), 199 to 218 (LARA…IFSR), 228 to 250 (LVIP…FPQL), 257 to 279 (IFTI…ISIS), and 289 to 308 (LLFG…SWLV).

It belongs to the UPF0324 family.

It is found in the cell membrane. The sequence is that of UPF0324 membrane protein VP0936 from Vibrio parahaemolyticus serotype O3:K6 (strain RIMD 2210633).